The sequence spans 535 residues: Ribonuclease Y (535 aa).

The helical transmembrane segment at 4-24 (IILLIVSALIGLILGYALISI) threads the bilayer. A disordered region spans residues 118 to 141 (ENLSSKEKVLDSKEQSLTDKSKHI). Residues 225-285 (TITSVHLPDD…IRREIARMTL (61 aa)) enclose the KH domain. Positions 351–444 (VLRHSVEVGK…VAAADALSSA (94 aa)) constitute an HD domain.

It belongs to the RNase Y family.

It is found in the cell membrane. In terms of biological role, endoribonuclease that initiates mRNA decay. The polypeptide is Ribonuclease Y (Streptococcus pyogenes serotype M1).